The following is a 174-amino-acid chain: Matrix protein (174 aa).

As to quaternary structure, homomultimer. Interacts with nucleoprotein and with the cytoplasmic domain of glycoprotein.

It localises to the virion membrane. It is found in the host endomembrane system. Functionally, plays a major role in assembly and budding of virion. Completely covers the ribonucleoprotein coil and keep it in condensed bullet-shaped form. Inhibits viral transcription and stimulates replication. The protein is Matrix protein (M) of Hordeum vulgare (Barley).